Consider the following 288-residue polypeptide: Pyridoxal kinase PdxY (288 aa).

Substrate is bound by residues serine 12 and 47–48 (TQ). Residues aspartate 114, glutamate 151, lysine 184, and 211 to 214 (RPLL) contribute to the ATP site. Aspartate 225 is a binding site for substrate.

Belongs to the pyridoxine kinase family. PdxY subfamily. As to quaternary structure, homodimer. The cofactor is Mg(2+).

It catalyses the reaction pyridoxal + ATP = pyridoxal 5'-phosphate + ADP + H(+). It participates in cofactor metabolism; pyridoxal 5'-phosphate salvage; pyridoxal 5'-phosphate from pyridoxal: step 1/1. Its function is as follows. Pyridoxal kinase involved in the salvage pathway of pyridoxal 5'-phosphate (PLP). Catalyzes the phosphorylation of pyridoxal to PLP. The protein is Pyridoxal kinase PdxY of Pseudomonas paraeruginosa (strain DSM 24068 / PA7) (Pseudomonas aeruginosa (strain PA7)).